Consider the following 414-residue polypeptide: Chaperone protein dnaJ 39 (414 aa).

Basic and acidic residues predominate over residues 1–24 (MATHSSRSENKDAGEEDELRRRNP). Positions 1–36 (MATHSSRSENKDAGEEDELRRRNPYEVLGIPSNSTD) are disordered. The J domain occupies 23–88 (NPYEVLGIPS…ENRRLYDTTG (66 aa)). Residues 296 to 324 (EKESLRSTEAQIVSKRTELLKFEAEYHEV) adopt a coiled-coil conformation. The disordered stretch occupies residues 362–395 (TKQGSSKSRSWSKKKSSLLMEPREEGEVAVREEG). Residues 382–395 (EPREEGEVAVREEG) show a composition bias toward basic and acidic residues.

It belongs to the DnaJ family. C/III subfamily. As to expression, expressed constitutively at low levels in seedlings, roots, leaves, stems, flowers and siliques.

The protein localises to the membrane. Its function is as follows. Plays a continuous role in plant development probably in the structural organization of compartments. Seems to be involved in early gravitropic signal transduction within the gravity-perceiving cells (statocytes). The chain is Chaperone protein dnaJ 39 (ATJ39) from Arabidopsis thaliana (Mouse-ear cress).